Consider the following 2400-residue polypeptide: Retinitis pigmentosa 1-like 1 protein (2400 aa).

Doublecortin domains lie at 34–118 and 152–231; these read KKIT…GPGR and RRIL…PAMK. 6 disordered regions span residues 104–152, 230–310, 444–1064, 1188–1251, 1275–1501, and 1697–2400; these read CSDK…KTPR, MKNA…DDMK, GRER…DREA, AMTE…GDLE, EAER…GAAE, and RGEH…DLDF. Polar residues predominate over residues 242–251; that stretch reads SGLTSRNKNG. The segment covering 277–287 has biased composition (pro residues); sequence RPGPSNPPVGP. Polar residues predominate over residues 450–460; sequence QDSASPASSTG. Composition is skewed to low complexity over residues 530-543 and 573-584; these read GASS…GSHE and DPASPALSLSSL. Residues 591-601 are compositionally biased toward polar residues; sequence AETQGQGTEQA. Low complexity-rich tracts occupy residues 625-637 and 645-654; these read SSTP…SQQG and ASAMSSPSSP. Residues 661–670 show a composition bias toward basic residues; that stretch reads PRGHPRHSHY. 2 stretches are compositionally biased toward polar residues: residues 711–740 and 825–835; these read TRTQ…SATV and CCSQPGTQPAQ. 3 stretches are compositionally biased toward low complexity: residues 864-880, 903-921, and 941-953; these read QRRS…HQST, PNSG…GSRG, and SGVS…RSSP. 2 stretches are compositionally biased toward polar residues: residues 1223-1238 and 1285-1299; these read LVTQ…SNQR and ASSN…TVQE. A 1-1; approximate repeat occupies 1292-1307; sequence LAENTVQEEVQLEETK. The interval 1292–1342 is 3 X 16 AA approximate tandem repeats of T-E-E-G-L-Q-E-E-G-V-Q-L-E-E-T-K; sequence LAENTVQEEVQLEETKEGTEGEGLQEEAVQLEETKTEEGLQEEGVQLEETK. One copy of the 1-2; approximate repeat lies at 1310 to 1326; it reads TEGEGLQEEAVQLEETK. One copy of the 1-3 repeat lies at 1327 to 1342; that stretch reads TEEGLQEEGVQLEETK. The span at 1346-1363 shows a compositional bias: acidic residues; it reads GEGQQEEEAQLEEIEETG. The segment covering 1434-1445 has biased composition (low complexity); sequence RASASAEPCPAE. Composition is skewed to polar residues over residues 1460–1472 and 1489–1501; these read TDPS…SGSQ and EHTQ…GAAE. The span at 1726 to 1736 shows a compositional bias: gly residues; sequence AEGGLGPGLSQ. 2 stretches are compositionally biased toward basic and acidic residues: residues 1752 to 1762 and 1769 to 1778; these read LNRDKDPKLGE and AQEREGKTHN. 3 repeat units span residues 1836–1851, 1852–1867, and 1875–1890. Composition is skewed to acidic residues over residues 1836-1909 and 1920-1948; these read EAPE…AEAP and ESVE…EAAQ. The 25 X 16 AA approximate tandem repeats of [ED]-[AT]-[PQ]-[ED]-[AVT]-E-[GKE]-[ED]-[AMT]-Q-[EPK]-[EAT]-[TSELP]-[EG]-[EGSQDI]-[AVIE] stretch occupies residues 1836 to 2244; it reads EAPEAEGEAQ…GEAQPESEGE (409 aa). One copy of the 2-4; approximate repeat lies at 1891-1906; sequence ETPEAEWEVQPESEGA. The stretch at 1907–1921 is one 2-5 repeat; that stretch reads EAPEAEKEAQPETES. A 2-6; approximate repeat occupies 1923–1938; it reads EALETEGEDEPESEGA. The stretch at 1934–2017 forms a coiled coil; it reads ESEGAEAQEA…EMQEAEEEAQ (84 aa). The 2-7 repeat unit spans residues 1939-1954; sequence EAQEAEEAAQEAEGQT. Residues 1949–1958 show a composition bias toward low complexity; sequence EAEGQTQPES. One copy of the 2-8; approximate repeat lies at 1955 to 1970; it reads QPESEVIESQEAEEEA. Acidic residues-rich tracts occupy residues 1959-2022, 2048-2075, 2083-2108, and 2117-2245; these read EVIE…ESDG, AQPE…QEAE, EDVD…EAEG, and EAPE…EGET. The stretch at 1971-1984 is one 2-9; approximate repeat; that stretch reads QPESEDVEALEVEV. A run of 2 repeats spans residues 1985–2000 and 2001–2016. Residues 2017 to 2031 form a 2-12; approximate repeat; that stretch reads QPESDGVEAQPKSEG. Residues 2033–2048 form a 2-13d repeat; sequence EAQEVEGETQKTEGDA. Positions 2054–2081 form a coiled coil; that stretch reads GVEAPEAEEEAQEAEGEVQEAEGEAHPE. The 2-14 repeat unit spans residues 2056-2071; it reads EAPEAEEEAQEAEGEV. A 2-15; approximate repeat occupies 2072 to 2085; it reads QEAEGEAHPESEDV. Tandem repeats lie at residues 2086-2101, 2102-2116, 2117-2132, 2133-2148, 2149-2164, 2165-2180, 2181-2196, 2197-2212, 2213-2228, and 2229-2244. A compositionally biased stretch (polar residues) spans 2292–2308; sequence PGSQTGPSSSRASSWGN. The segment covering 2312-2327 has biased composition (basic and acidic residues); sequence KDSENDHVLGDTRSPD.

As to quaternary structure, interacts with RP1; has a synergistic effect with RP1 in photoreceptor differentiation. As to expression, retinal-specific; expressed in photoreceptor.

It is found in the cytoplasm. Its subcellular location is the cytoskeleton. The protein resides in the cilium axoneme. It localises to the cell projection. The protein localises to the cilium. It is found in the photoreceptor outer segment. Functionally, required for the differentiation of photoreceptor cells. Plays a role in the organization of outer segment of rod and cone photoreceptors. The sequence is that of Retinitis pigmentosa 1-like 1 protein (RP1L1) from Homo sapiens (Human).